Here is a 343-residue protein sequence, read N- to C-terminus: uncharacterized protein (343 aa).

A run of 11 helical transmembrane segments spans residues 13–33 (VILY…SMCG), 44–64 (LWGY…ATLD), 71–91 (MHPV…LFFI), 121–141 (ILLL…LTGL), 148–168 (NASL…YLIF), 177–197 (FLGI…GDFS), 203–223 (VAVT…LDTV), 244–264 (VGGF…ELPL), 269–289 (YALG…YIAI), 296–316 (MVGA…FIIL), and 320–340 (FSIM…ILYW). EamA domains lie at 55 to 192 (IFFG…YLLT) and 216 to 340 (FFWS…ILYW).

Belongs to the EamA transporter family.

It localises to the cell membrane. This is an uncharacterized protein from Methanothermobacter thermautotrophicus (strain ATCC 29096 / DSM 1053 / JCM 10044 / NBRC 100330 / Delta H) (Methanobacterium thermoautotrophicum).